Here is a 313-residue protein sequence, read N- to C-terminus: Ketimine reductase mu-crystallin (313 aa).

Arg-47 lines the 3,3',5-triiodo-L-thyronine pocket. Residues Ser-90, His-91, Arg-118, Ala-143, Val-145, Gln-146, Asn-167, Arg-168, Thr-169, Asn-172, Thr-204, Met-205, and Val-225 each coordinate NADPH. Residue Glu-256 participates in 3,3',5-triiodo-L-thyronine binding. Residue Ser-291 participates in NADPH binding.

It belongs to the ornithine cyclodeaminase/mu-crystallin family. As to quaternary structure, homodimer. Binds the thyroid hormone triiodothyronine (T3); T3 binding inhibits enzymatic activity.

It is found in the cytoplasm. It carries out the reaction L-pipecolate + NADP(+) = Delta(1)-piperideine-2-carboxylate + NADPH + H(+). The catalysed reaction is L-pipecolate + NAD(+) = Delta(1)-piperideine-2-carboxylate + NADH + H(+). It catalyses the reaction L-proline + NADP(+) = 1-pyrroline-2-carboxylate + NADPH + H(+). The enzyme catalyses L-proline + NAD(+) = 1-pyrroline-2-carboxylate + NADH + H(+). It carries out the reaction (3R)-1,4-thiomorpholine-3-carboxylate + NAD(+) = 3,4-dehydrothiomorpholine-3-carboxylate + NADH + 2 H(+). The catalysed reaction is (3R)-1,4-thiomorpholine-3-carboxylate + NADP(+) = 3,4-dehydrothiomorpholine-3-carboxylate + NADPH + 2 H(+). It catalyses the reaction (S)-cystathionine ketimine + NADH + 2 H(+) = (3R,5S)-2,3,5,6,7-pentahydro-1,4-thiazepine-3,5-dicarboxylate + NAD(+). The enzyme catalyses (S)-cystathionine ketimine + NADPH + 2 H(+) = (3R,5S)-2,3,5,6,7-pentahydro-1,4-thiazepine-3,5-dicarboxylate + NADP(+). It carries out the reaction (R)-lanthionine ketimine + NADPH + 2 H(+) = (3R,5R)-1,4-thiomorpholine-3,5-dicarboxylate + NADP(+). The catalysed reaction is Delta(2)-thiazoline-2-carboxylate + NADPH + 2 H(+) = L-thiazolidine-2-carboxylate + NADP(+). Functionally, catalyzes the NAD(P)H-dependent reduction of imine double bonds of a number of cyclic ketimine substrates, including sulfur-containing cyclic ketimines. Under physiological conditions, it efficiently catalyzes delta(1)-piperideine-2-carboxylate (P2C) and delta(1)-pyrroline-2-carboxylate (Pyr2C) reduction, suggesting a central role in lysine and glutamate metabolism. Additional substrates are delta(2)-thiazoline-2-carboxylate (T2C), 3,4-dehydrothiomorpholine-3-carboxylate (AECK), and (R)-lanthionine ketimine (LK) that is reduced at very low rate compared to other substrates. Also catalyzes the NAD(P)H-dependent reduction of (S)-cystathionine ketimine (CysK). The protein is Ketimine reductase mu-crystallin of Rattus norvegicus (Rat).